A 309-amino-acid polypeptide reads, in one-letter code: Zinc-finger homeodomain protein 5 (309 aa).

Residues 1-16 (MDMRSHEMIERRREDN) are compositionally biased toward basic and acidic residues. The segment at 1–21 (MDMRSHEMIERRREDNGNNNG) is disordered. A ZF-HD dimerization-type; degenerate zinc finger spans residues 76-125 (YRECLKNHAASVGGSVHDGCGEFMPSGEEGTIEALRCAACDCHRNFHRKE). A DNA-binding region (homeobox) is located at residues 240–303 (KKRFRTKFTT…NNKNNAKKPP (64 aa)).

In terms of assembly, homo- and heterodimer with other ZFHD proteins. Interacts with MIF1, MIF2 and MIF3; these interactions prevent nuclear localization and DNA-binding to inhibit transcription regulation activity. Binds to ZHD1, ZHD2, ZHD4, ZHD10 and ZHD11. As to expression, mostly expressed in flowers and inflorescence.

It is found in the nucleus. Its function is as follows. Putative transcription factor. Binds DNA at 5'-ATTA-3' consensus promoter regions. Regulates floral architecture and leaf development. Regulators in the abscisic acid (ABA) signal pathway that confers sensitivity to ABA in an ARF2-dependent manner. This chain is Zinc-finger homeodomain protein 5 (ZHD5), found in Arabidopsis thaliana (Mouse-ear cress).